Here is a 284-residue protein sequence, read N- to C-terminus: RNA polymerase sigma factor RpoH (284 aa).

The tract at residues 53-122 (LILSHLRFVI…IHEYVLRNWR (70 aa)) is sigma-70 factor domain-2. Residues 77 to 80 (DLIQ) carry the Interaction with polymerase core subunit RpoC motif. The segment at 228–280 (ALLRLDERSRHIIHARWLDKNKKNTLQNIANNYGISAERVRQLEKNAMKKLKL) is sigma-70 factor domain-4. Positions 253–272 (LQNIANNYGISAERVRQLEK) form a DNA-binding region, H-T-H motif.

This sequence belongs to the sigma-70 factor family. RpoH subfamily. As to quaternary structure, interacts with the RNA polymerase core enzyme.

The protein localises to the cytoplasm. Its function is as follows. Sigma factors are initiation factors that promote the attachment of RNA polymerase to specific initiation sites and are then released. This sigma factor is involved in regulation of expression of heat shock genes. This chain is RNA polymerase sigma factor RpoH, found in Buchnera aphidicola subsp. Acyrthosiphon pisum (strain APS) (Acyrthosiphon pisum symbiotic bacterium).